We begin with the raw amino-acid sequence, 567 residues long: Periplasmic [NiFe] hydrogenase large subunit (567 aa).

Glu62 is a Mg(2+) binding site. Ni(2+) is bound by residues Cys81 and Cys84. Cys84 lines the Fe cation pocket. Leu498 contacts Mg(2+). Residues Cys546 and Cys549 each coordinate Ni(2+). Cys549 is a binding site for Fe cation. A Mg(2+)-binding site is contributed by His552. Positions 553–567 (VIDGHTNEVHKFRIL) are excised as a propeptide.

Belongs to the [NiFe]/[NiFeSe] hydrogenase large subunit family. Heterodimer of a large and a small subunit. It depends on Ni(2+) as a cofactor. Requires Fe cation as cofactor.

It is found in the periplasm. It carries out the reaction 2 Fe(III)-[cytochrome c3] + H2 = 2 Fe(II)-[cytochrome c3] + 2 H(+). Catalyzes the reversible oxidoreduction of molecular hydrogen, in conjunction with a specific electron acceptor, cytochrome c3. The protein is Periplasmic [NiFe] hydrogenase large subunit (hydB) of Nitratidesulfovibrio vulgaris (strain DSM 19637 / Miyazaki F) (Desulfovibrio vulgaris).